The sequence spans 308 residues: MDWGRFVEEKVREIRETVGDSKAIIALSGGVDSSTAAVLAHKAIGDRLHAVFVNTGFLRKGEPEFVVKTFRDEFGMNLHYVDAQDRFFSALKGVTDPEEKRKIIGRVFIEVFEEVAKKIGAEYLIQGTIAPDWIESQGKIKSHHNVGGLPEKLNLKLIEPLRDLYKDEVRELAKFLGLPEKIYNRMPFPGPGLAVRVIGEVTPEKIRIVREANAIVEEEVERAGLRPWQAFAVLLGVKTVGVQGDIRAYKETIAVRIVESIDGMTANAMNVPWEVLQRIAFRITSEIPEVGRVLYDITNKPPATIEFE.

The region spanning 1–185 is the GMPS ATP-PPase domain; it reads MDWGRFVEEK…LGLPEKIYNR (185 aa). 28–34 lines the ATP pocket; it reads SGGVDSS.

In terms of assembly, heterodimer composed of a glutamine amidotransferase subunit (A) and a GMP-binding subunit (B).

It catalyses the reaction XMP + L-glutamine + ATP + H2O = GMP + L-glutamate + AMP + diphosphate + 2 H(+). It functions in the pathway purine metabolism; GMP biosynthesis; GMP from XMP (L-Gln route): step 1/1. Functionally, catalyzes the synthesis of GMP from XMP. The sequence is that of GMP synthase [glutamine-hydrolyzing] subunit B (guaAB) from Pyrococcus horikoshii (strain ATCC 700860 / DSM 12428 / JCM 9974 / NBRC 100139 / OT-3).